Reading from the N-terminus, the 119-residue chain is Ribonuclease P protein component (119 aa).

Belongs to the RnpA family. In terms of assembly, consists of a catalytic RNA component (M1 or rnpB) and a protein subunit.

The enzyme catalyses Endonucleolytic cleavage of RNA, removing 5'-extranucleotides from tRNA precursor.. Its function is as follows. RNaseP catalyzes the removal of the 5'-leader sequence from pre-tRNA to produce the mature 5'-terminus. It can also cleave other RNA substrates such as 4.5S RNA. The protein component plays an auxiliary but essential role in vivo by binding to the 5'-leader sequence and broadening the substrate specificity of the ribozyme. The polypeptide is Ribonuclease P protein component (Coprothermobacter proteolyticus (strain ATCC 35245 / DSM 5265 / OCM 4 / BT)).